The sequence spans 173 residues: Ribulose bisphosphate carboxylase small subunit, chloroplastic 1 (173 aa).

The transit peptide at 1-49 directs the protein to the chloroplast; that stretch reads MASIPATVATVAQANMVAPFTGLKANAAFPVTKKVNDFSTLPSNGGRVQ.

The protein belongs to the RuBisCO small chain family. As to quaternary structure, heterohexadecamer of 8 large and 8 small subunits.

Its subcellular location is the plastid. It localises to the chloroplast. Functionally, ruBisCO catalyzes two reactions: the carboxylation of D-ribulose 1,5-bisphosphate, the primary event in carbon dioxide fixation, as well as the oxidative fragmentation of the pentose substrate. Both reactions occur simultaneously and in competition at the same active site. Although the small subunit is not catalytic it is essential for maximal activity. This Flaveria pringlei protein is Ribulose bisphosphate carboxylase small subunit, chloroplastic 1.